The sequence spans 300 residues: 7-methylguanosine phosphate-specific 5'-nucleotidase (300 aa).

Aspartate 41 acts as the Nucleophile in catalysis. The Mg(2+) site is built by aspartate 41 and aspartate 43. The Proton donor role is filled by aspartate 43. Residue glutamate 88 participates in CMP binding. Glutamate 88 contacts N(7)-methyl-GMP. Substrate is bound by residues 156–157 (SA) and lysine 205. Residue aspartate 230 participates in Mg(2+) binding. Lysine 256 carries the N6-acetyllysine modification.

This sequence belongs to the pyrimidine 5'-nucleotidase family. As to quaternary structure, monomer.

It localises to the cytoplasm. It carries out the reaction N(7)-methyl-GMP + H2O = N(7)-methylguanosine + phosphate. The enzyme catalyses CMP + H2O = cytidine + phosphate. The catalysed reaction is a ribonucleoside 5'-phosphate + H2O = a ribonucleoside + phosphate. Its function is as follows. Specifically hydrolyzes 7-methylguanosine monophosphate (m(7)GMP) to 7-methylguanosine and inorganic phosphate. The specific activity for m(7)GMP may protect cells against undesired salvage of m(7)GMP and its incorporation into nucleic acids. Also has weak activity for CMP. UMP and purine nucleotides are poor substrates. In Mus musculus (Mouse), this protein is 7-methylguanosine phosphate-specific 5'-nucleotidase (Nt5c3b).